The primary structure comprises 893 residues: ATPase family gene 2 protein homolog A (893 aa).

Residues 1 to 10 (MSSKKNRKRL) are compositionally biased toward basic residues. The disordered stretch occupies residues 1-26 (MSSKKNRKRLNQSAENGSSLPSAASS). The required for interaction with AFG2B and CINP stretch occupies residues 1–237 (MSSKKNRKRL…SLELSLQLSQ (237 aa)). Positions 11–25 (NQSAENGSSLPSAAS) are enriched in polar residues. A Phosphothreonine modification is found at Thr-272. A phosphoserine mark is found at Ser-274 and Ser-279. Residues 394-401 (GPPGTGKT) and 668-675 (GPPGCSKT) each bind ATP. A Glycyl lysine isopeptide (Lys-Gly) (interchain with G-Cter in SUMO2) cross-link involves residue Lys-859.

Belongs to the AAA ATPase family. AFG2 subfamily. As to quaternary structure, part of the 55LCC heterohexameric ATPase complex composed at least of AIRIM, AFG2A, AFG2B and CINP. Associates with pre-60S ribosomal particles.

Its subcellular location is the cytoplasm. The protein localises to the mitochondrion. The protein resides in the cytoskeleton. It localises to the spindle. It carries out the reaction ATP + H2O = ADP + phosphate + H(+). AFG2A alone display limited ATPase activity and is not regulated by RNA or DNA binding. In the context of 55LCC heterohexameric ATPase complex, the ATPase activity increases and is stimulated by DNA binding and inhibited in presence of RNA. ATP-dependent chaperone part of the 55LCC heterohexameric ATPase complex which is chromatin-associated and promotes replisome proteostasis to maintain replication fork progression and genome stability. Required for replication fork progression, sister chromatid cohesion, and chromosome stability. The ATPase activity is specifically enhanced by replication fork DNA and is coupled to cysteine protease-dependent cleavage of replisome substrates in response to replication fork damage. Uses ATPase activity to process replisome substrates in S-phase, facilitating their proteolytic turnover from chromatin to ensure DNA replication and mitotic fidelity. Plays an essential role in the cytoplasmic maturation steps of pre-60S ribosomal particles by promoting the release of shuttling protein RSL24D1/RLP24 from the pre-ribosomal particles. May be involved in morphological and functional mitochondrial transformations during spermatogenesis. The protein is ATPase family gene 2 protein homolog A of Homo sapiens (Human).